Consider the following 333-residue polypeptide: Protoheme IX farnesyltransferase (333 aa).

A run of 7 helical transmembrane segments spans residues 64-84 (LICT…LNCL), 110-130 (TVFL…VSGV), 133-153 (LAAG…TVIL), 161-181 (IVFG…AATG), 189-209 (WLFG…AILL), 246-266 (IMGV…LLPF), and 287-307 (AKSL…LLLI).

It belongs to the UbiA prenyltransferase family. Protoheme IX farnesyltransferase subfamily.

The protein resides in the cell inner membrane. The catalysed reaction is heme b + (2E,6E)-farnesyl diphosphate + H2O = Fe(II)-heme o + diphosphate. It functions in the pathway porphyrin-containing compound metabolism; heme O biosynthesis; heme O from protoheme: step 1/1. Its function is as follows. Converts heme B (protoheme IX) to heme O by substitution of the vinyl group on carbon 2 of heme B porphyrin ring with a hydroxyethyl farnesyl side group. This is Protoheme IX farnesyltransferase from Prochlorococcus marinus (strain MIT 9215).